A 67-amino-acid chain; its full sequence is DNA-directed RNA polymerase subunit omega (67 aa).

This sequence belongs to the RNA polymerase subunit omega family. In terms of assembly, the RNAP catalytic core consists of 2 alpha, 1 beta, 1 beta' and 1 omega subunit. When a sigma factor is associated with the core the holoenzyme is formed, which can initiate transcription.

It catalyses the reaction RNA(n) + a ribonucleoside 5'-triphosphate = RNA(n+1) + diphosphate. In terms of biological role, promotes RNA polymerase assembly. Latches the N- and C-terminal regions of the beta' subunit thereby facilitating its interaction with the beta and alpha subunits. The polypeptide is DNA-directed RNA polymerase subunit omega (Polynucleobacter asymbioticus (strain DSM 18221 / CIP 109841 / QLW-P1DMWA-1) (Polynucleobacter necessarius subsp. asymbioticus)).